Consider the following 413-residue polypeptide: von Willebrand factor A domain-containing protein 1 (413 aa).

Positions M1–A20 are cleaved as a signal peptide. A VWFA domain is found at D32–M211. S72, S78, and S91 each carry phosphoserine. Fibronectin type-III domains lie at W212–E302 and G305–G395. N262 carries N-linked (GlcNAc...) asparagine glycosylation. A disordered region spans residues A385–P413.

As to quaternary structure, homodimer or homomultimer; disulfide-linked. Interacts with HSPG2. In terms of processing, N-glycosylated.

It is found in the secreted. The protein localises to the extracellular space. It localises to the extracellular matrix. Its subcellular location is the basement membrane. Promotes matrix assembly. Involved in the organization of skeletal muscles and in the formation of neuromuscular junctions. This chain is von Willebrand factor A domain-containing protein 1 (VWA1), found in Bos taurus (Bovine).